Reading from the N-terminus, the 52-residue chain is uncharacterized protein (52 aa).

The segment at 24–52 is disordered; sequence LRENPSKNVRTIPDAGDENSSFGHARVIA.

This is an uncharacterized protein from Treponema pallidum (strain Nichols).